The following is a 450-amino-acid chain: Phosphoglucosamine mutase (450 aa).

The Phosphoserine intermediate role is filled by S102. Residues S102, D242, D244, and D246 each coordinate Mg(2+). Residue S102 is modified to Phosphoserine.

Belongs to the phosphohexose mutase family. Mg(2+) is required as a cofactor. Post-translationally, activated by phosphorylation.

The enzyme catalyses alpha-D-glucosamine 1-phosphate = D-glucosamine 6-phosphate. Its function is as follows. Catalyzes the conversion of glucosamine-6-phosphate to glucosamine-1-phosphate. The polypeptide is Phosphoglucosamine mutase (Lachnospira eligens (strain ATCC 27750 / DSM 3376 / VPI C15-48 / C15-B4) (Eubacterium eligens)).